The sequence spans 108 residues: Ig kappa chain V-VI region NQ2-6.1 (108 aa).

The interval 1-23 (QILLTQSPAIMSASPGQKVTMTC) is framework-1. An intrachain disulfide couples C23 to C87. Positions 24–33 (SASSSVSYMY) are complementarity-determining-1. The tract at residues 34 to 48 (WYQQKPGSSPRLLIY) is framework-2. The segment at 49-55 (DTSNLAS) is complementarity-determining-2. The interval 56 to 87 (GVPVRFSGSGSATSYSLTITRMQAEDAATYYC) is framework-3. The segment at 88–98 (QQWSSYPPMLT) is complementarity-determining-3. A framework-4 region spans residues 99-108 (FGAGTKLELK).

The protein is Ig kappa chain V-VI region NQ2-6.1 of Mus musculus (Mouse).